The following is a 159-amino-acid chain: Ribosomal RNA large subunit methyltransferase H (159 aa).

Residues leucine 76, glycine 108, and 127-132 contribute to the S-adenosyl-L-methionine site; that span reads FGRLTL.

The protein belongs to the RNA methyltransferase RlmH family. As to quaternary structure, homodimer.

It is found in the cytoplasm. It catalyses the reaction pseudouridine(1915) in 23S rRNA + S-adenosyl-L-methionine = N(3)-methylpseudouridine(1915) in 23S rRNA + S-adenosyl-L-homocysteine + H(+). Its function is as follows. Specifically methylates the pseudouridine at position 1915 (m3Psi1915) in 23S rRNA. This chain is Ribosomal RNA large subunit methyltransferase H, found in Listeria monocytogenes serovar 1/2a (strain ATCC BAA-679 / EGD-e).